Here is a 75-residue protein sequence, read N- to C-terminus: UPF0270 protein PST_1436 (75 aa).

The protein belongs to the UPF0270 family.

This is UPF0270 protein PST_1436 from Stutzerimonas stutzeri (strain A1501) (Pseudomonas stutzeri).